Reading from the N-terminus, the 1142-residue chain is Nucleoporin nup131 (1142 aa).

The protein belongs to the nucleoporin Nup133 family. In terms of assembly, component of the npc107-120 complex which consists of nup85, nup107, nup120, nup131, nup132 and seh1. Interacts with nup107.

It is found in the nucleus. Functionally, functions as a component of the nuclear pore complex (NPC). NPC components, collectively referred to as nucleoporins (NUPs), can play the role of both NPC structural components and of docking or interaction partners for transiently associated nuclear transport factors. Active directional transport is assured by both, a Phe-Gly (FG) repeat affinity gradient for these transport factors across the NPC and a transport cofactor concentration gradient across the nuclear envelope. The polypeptide is Nucleoporin nup131 (nup131) (Schizosaccharomyces pombe (strain 972 / ATCC 24843) (Fission yeast)).